Consider the following 96-residue polypeptide: Aspartyl/glutamyl-tRNA(Asn/Gln) amidotransferase subunit C (96 aa).

It belongs to the GatC family. In terms of assembly, heterotrimer of A, B and C subunits.

It carries out the reaction L-glutamyl-tRNA(Gln) + L-glutamine + ATP + H2O = L-glutaminyl-tRNA(Gln) + L-glutamate + ADP + phosphate + H(+). The enzyme catalyses L-aspartyl-tRNA(Asn) + L-glutamine + ATP + H2O = L-asparaginyl-tRNA(Asn) + L-glutamate + ADP + phosphate + 2 H(+). Functionally, allows the formation of correctly charged Asn-tRNA(Asn) or Gln-tRNA(Gln) through the transamidation of misacylated Asp-tRNA(Asn) or Glu-tRNA(Gln) in organisms which lack either or both of asparaginyl-tRNA or glutaminyl-tRNA synthetases. The reaction takes place in the presence of glutamine and ATP through an activated phospho-Asp-tRNA(Asn) or phospho-Glu-tRNA(Gln). This Oceanobacillus iheyensis (strain DSM 14371 / CIP 107618 / JCM 11309 / KCTC 3954 / HTE831) protein is Aspartyl/glutamyl-tRNA(Asn/Gln) amidotransferase subunit C.